The chain runs to 265 residues: UDP-N-acetylenolpyruvoylglucosamine reductase (265 aa).

Positions 15-169 (GVGGPAELWT…TRVRLKLKER (155 aa)) constitute an FAD-binding PCMH-type domain. The active site involves Arg-149. Residues 182 to 203 (DRARKGQPKRKSAGCAFKNPPG) form a disordered region. Cys-196 acts as the Proton donor in catalysis.

This sequence belongs to the MurB family. FAD serves as cofactor.

The protein localises to the cytoplasm. It catalyses the reaction UDP-N-acetyl-alpha-D-muramate + NADP(+) = UDP-N-acetyl-3-O-(1-carboxyvinyl)-alpha-D-glucosamine + NADPH + H(+). The protein operates within cell wall biogenesis; peptidoglycan biosynthesis. Its function is as follows. Cell wall formation. This is UDP-N-acetylenolpyruvoylglucosamine reductase from Thermus thermophilus (strain ATCC 27634 / DSM 579 / HB8).